Consider the following 288-residue polypeptide: Pantothenate synthetase (288 aa).

27-34 contributes to the ATP binding site; sequence MGALHEGH. Histidine 34 (proton donor) is an active-site residue. Residues glutamine 58 and glutamine 150 each coordinate (R)-pantoate. Glutamine 58 contacts beta-alanine. ATP contacts are provided by residues leucine 173 and 181–184; that span reads YSSR.

It belongs to the pantothenate synthetase family. As to quaternary structure, homodimer.

It localises to the cytoplasm. It carries out the reaction (R)-pantoate + beta-alanine + ATP = (R)-pantothenate + AMP + diphosphate + H(+). It participates in cofactor biosynthesis; (R)-pantothenate biosynthesis; (R)-pantothenate from (R)-pantoate and beta-alanine: step 1/1. Its function is as follows. Catalyzes the condensation of pantoate with beta-alanine in an ATP-dependent reaction via a pantoyl-adenylate intermediate. This Tropheryma whipplei (strain TW08/27) (Whipple's bacillus) protein is Pantothenate synthetase.